The chain runs to 219 residues: UPF0502 protein Ppro_2903 (219 aa).

The protein belongs to the UPF0502 family.

The sequence is that of UPF0502 protein Ppro_2903 from Pelobacter propionicus (strain DSM 2379 / NBRC 103807 / OttBd1).